Consider the following 291-residue polypeptide: Lysosomal amino acid transporter 1 homolog (291 aa).

At 1–37 the chain is on the lumenal side; it reads MVWKKLGSRNFSSCPSGSIQWIWDVLGECAQDGWDEA. An N-linked (GlcNAc...) asparagine glycan is attached at asparagine 10. The 67-residue stretch at 34–100 folds into the PQ-loop 1 domain; sequence WDEASVGLGL…LADQLPLQTY (67 aa). The helical transmembrane segment at 38-58 threads the bilayer; sequence SVGLGLISILCFAASTFPQFI. Residues 59 to 71 are Cytoplasmic-facing; that stretch reads KAYKTGNMDQALS. Residues 72 to 92 traverse the membrane as a helical segment; sequence LWFLLGWIGGDSCNLIGSFLA. The Lumenal segment spans residues 93 to 98; that stretch reads DQLPLQ. A helical membrane pass occupies residues 99 to 119; the sequence is TYTAVYYVLADLVMLTLYFYY. Residues 120-134 are Cytoplasmic-facing; it reads KFRTRPSLLSAPINS. Residues 135-155 form a helical membrane-spanning segment; it reads VLLFLMGMACATPLLSAAGPV. Over 156–182 the chain is Lumenal; that stretch reads AAPREAFRGRALLSVESGSKPFTRQEV. Residues 183–203 form a helical membrane-spanning segment; it reads IGFVIGSISSVLYLLSRLPQI. Residues 184–243 enclose the PQ-loop 2 domain; the sequence is GFVIGSISSVLYLLSRLPQIRTNFLRKSTQGISYSLFALVMLGNTLYGLSVLLKNPEEGQ. Topologically, residues 204–214 are cytoplasmic; sequence RTNFLRKSTQG. Residues 215–235 form a helical membrane-spanning segment; that stretch reads ISYSLFALVMLGNTLYGLSVL. The Lumenal segment spans residues 236–254; it reads LKNPEEGQSEGSYLLHHLP. Residues 255–275 form a helical membrane-spanning segment; the sequence is WLVGSLGVLLLDTIISIQFLV. Topologically, residues 276-291 are cytoplasmic; sequence YRRSTAASELEPLLPS. The Di-leucine motif motif lies at 288-289; sequence LL.

It belongs to the laat-1 family.

Its subcellular location is the lysosome membrane. Functionally, amino acid transporter that specifically mediates the pH-dependent export of the cationic amino acids arginine, histidine and lysine from lysosomes. The protein is Lysosomal amino acid transporter 1 homolog of Homo sapiens (Human).